Reading from the N-terminus, the 60-residue chain is Mastoparan-VT6 (60 aa).

The N-terminal stretch at 1 to 27 (MKNTILILFTAFIALLGFFGMSAEALA) is a signal peptide. 4 AXPX repeats span residues 27–30 (ADPK), 31–34 (ADPL), 35–38 (AGPN), and 41–44 (ADPE). A propeptide spanning residues 28-45 (DPKADPLAGPNPDADPEA) is cleaved from the precursor. The residue at position 59 (leucine 59) is a Leucine amide.

It belongs to the MCD family. Mastoparan subfamily. As to expression, expressed by the venom gland.

The protein localises to the secreted. In terms of biological role, the synthetic peptide shows antimicrobial activities against Gram-negative bacteria (but not against all strains tested), Gram-positive bacteria (all strains tested) and the fungi C.albicans and C.parapsilosis. Exhibits little hemolytic activity against washed human erythrocytes. This is Mastoparan-VT6 from Vespa tropica (Greater banded hornet).